The sequence spans 324 residues: Transcriptional regulator protein Pur-beta (324 aa).

The segment at 1–47 is disordered; the sequence is MADGDSGSERGGGGGGGGGPGGFQPAPRGGGGGGGGPGGEQETQELA. Ala2 is modified (N-acetylalanine). Ser6 and Ser8 each carry phosphoserine. Residues 9-39 are compositionally biased toward gly residues; sequence ERGGGGGGGGGPGGFQPAPRGGGGGGGGPGG. Arg28 is modified (omega-N-methylarginine). A DNA-binding region spans residues 37–263; the sequence is PGGEQETQEL…GVFLRVSEVK (227 aa). Phosphothreonine is present on Thr43. Ser113 is modified (phosphoserine). Residue Arg164 is modified to Omega-N-methylarginine. Lys279 carries the post-translational modification N6-acetyllysine. Residues 297–307 show a composition bias toward basic and acidic residues; that stretch reads RQRDKLYERRG. The segment at 297–324 is disordered; the sequence is RQRDKLYERRGGGSGGGDESEGEEVDED. Residue Arg306 is modified to Omega-N-methylarginine. A phosphoserine mark is found at Ser310 and Ser316. Residues 314-324 show a composition bias toward acidic residues; it reads DESEGEEVDED.

The protein belongs to the PUR DNA-binding protein family. Homodimer, heterodimer with PURA and heterotrimer with PURA and YBX1/Y-box protein 1. Interacts with MYOCD and SRF.

Its subcellular location is the nucleus. In terms of biological role, transcriptional regulator which can act as an activator or a repressor. Represses the transcription of ACTA2 in fibroblasts and smooth muscle cells via its ability to interact with the purine-rich strand of a MCAT-containing element in the 5' flanking region of the gene. Represses the transcription of MYOCD, capable of repressing all isoforms of MYOCD but the magnitude of the repressive effects is most notable for the SMC-specific isoforms. Promotes hepatic glucose production by activating the transcription of ADCY6, leading to cAMP accumulation, increased PKA activity, CREB activation, and increased transcription of PCK1 and G6PC genes. Has capacity to bind repeated elements in single-stranded DNA such as the purine-rich single strand of the PUR element located upstream of the MYC gene. Participates in transcriptional and translational regulation of alpha-MHC expression in cardiac myocytes by binding to the purine-rich negative regulatory (PNR) element. Modulates constitutive liver galectin-3 gene transcription by binding to its promoter. May play a role in the dendritic transport of a subset of mRNAs. In Mus musculus (Mouse), this protein is Transcriptional regulator protein Pur-beta (Purb).